We begin with the raw amino-acid sequence, 536 residues long: Cytoplasmic dynein 2 intermediate chain 2 (536 aa).

Residue Ser-15 is modified to Phosphoserine. A DYNLL2 binding region spans residues 80–93 (RNHVDAQVQTEAPV). A DYNLRB1 binding region spans residues 106-131 (PRLAAFLRRVEAMVIRELNKNWQSHA). WD repeat units follow at residues 215-255 (EVPS…DPLL), 264-308 (THTD…QLQL), 390-430 (PHGG…PLTS), 433-473 (LSLK…QKPT), and 480-520 (QDES…TEQG).

This sequence belongs to the dynein light intermediate chain family. In terms of assembly, the cytoplasmic dynein 2 complex consists of two catalytic heavy chains (HCs) and a number of non-catalytic subunits presented by intermediate chains (ICs), light intermediate chains (LICs) and light chains (LCs). Among them, a heavy chain (DYNC2H1), two intermediate chains (DYNC2I2 and DYNC2I1), a light intermediate chain (DYNC2LI1), and a light chain (DYNLT2B) are unique to the cytoplasmic dynein complex 2, but a subset of the light chains are also shared by dynein-1 and dynein-2 complexes. Interacts with DYNC2I1; their C-terminal domains each bind a copy of the heavy chain, and their extended N-terminal regions are held together by an array of light chain dimers. Interacts with DYNLL2; this interaction is essential for dynein-2-mediated retrograde trafficking of ciliary proteins. Interacts with DYNLRB1; this interaction is essential for dynein-2-mediated retrograde trafficking of ciliary proteins. Interacts (via the WD domains) with MAP3K7 and TAB3. Interacts (via WD domains) with TAB2 (via C-terminus). Interacts (via WD domains) with TRAF6 (via TRAF-type domains). Expressed in several cell lines (at protein level).

The protein resides in the cytoplasm. It is found in the cytoskeleton. The protein localises to the cilium basal body. It localises to the cilium axoneme. Its subcellular location is the microtubule organizing center. The protein resides in the centrosome. It is found in the cell projection. The protein localises to the cilium. It localises to the filopodium. Its function is as follows. Acts as one of several non-catalytic accessory components of the cytoplasmic dynein 2 complex (dynein-2 complex), a motor protein complex that drives the movement of cargos along microtubules within cilia and flagella in concert with the intraflagellar transport (IFT) system. DYNC2I2 plays a major role in retrograde ciliary protein trafficking and in ciliogenesis. Required also to maintain a functional transition zone. Acts as a negative regulator of the Toll-like and IL-1R receptor signaling pathways. Inhibits the MAP3K7-induced NF-kappa-B activation pathway. Inhibits MAP3K7 phosphorylation at 'Thr-184' and 'Thr-187' upon Il-1 beta stimulation. The sequence is that of Cytoplasmic dynein 2 intermediate chain 2 from Homo sapiens (Human).